The primary structure comprises 298 residues: Lactose transport system permease protein LacF (298 aa).

Helical transmembrane passes span 17-37 (GWLF…YPIL), 77-97 (VIFF…LAAM), 112-132 (MIFL…KSMF), 151-171 (PIGW…AITW), 208-228 (AFLT…TSTI), and 269-289 (FSYA…LSFL). In terms of domain architecture, ABC transmembrane type-1 spans 73 to 290 (LQNTVIFFVV…LMVAVLSFLQ (218 aa)).

Belongs to the binding-protein-dependent transport system permease family. MalFG subfamily.

It localises to the cell inner membrane. Its function is as follows. Part of the binding-protein-dependent transport system for lactose. Probably responsible for the translocation of the substrate across the membrane. The sequence is that of Lactose transport system permease protein LacF (lacF) from Rhizobium radiobacter (Agrobacterium tumefaciens).